A 206-amino-acid chain; its full sequence is Small ribosomal subunit protein uS4 (206 aa).

The S4 RNA-binding domain maps to 96–156; that stretch reads GRLDNVVYRM…EKAKKQARIK (61 aa).

Belongs to the universal ribosomal protein uS4 family. Part of the 30S ribosomal subunit. Contacts protein S5. The interaction surface between S4 and S5 is involved in control of translational fidelity.

In terms of biological role, one of the primary rRNA binding proteins, it binds directly to 16S rRNA where it nucleates assembly of the body of the 30S subunit. With S5 and S12 plays an important role in translational accuracy. This Aeromonas hydrophila subsp. hydrophila (strain ATCC 7966 / DSM 30187 / BCRC 13018 / CCUG 14551 / JCM 1027 / KCTC 2358 / NCIMB 9240 / NCTC 8049) protein is Small ribosomal subunit protein uS4.